A 320-amino-acid chain; its full sequence is Beta-sarcoglycan (320 aa).

The span at Met1–Ala10 shows a compositional bias: low complexity. The disordered stretch occupies residues Met1–Val34. Topologically, residues Met1 to Ala67 are cytoplasmic. Positions Ser23–Val34 are enriched in basic and acidic residues. Residues Ile68–Ile88 form a helical; Signal-anchor for type II membrane protein membrane-spanning segment. Residues Trp89–His320 lie on the Extracellular side of the membrane. Asn160, Asn213, and Asn260 each carry an N-linked (GlcNAc...) asparagine glycan. 2 disulfide bridges follow: Cys290/Cys316 and Cys292/Cys309.

The protein belongs to the sarcoglycan beta/delta/gamma/zeta family. Cross-link to form 2 major subcomplexes: one consisting of SGCB, SGCD and SGCG and the other consisting of SGCB and SGCD. The association between SGCB and SGCG is particularly strong while SGCA is loosely associated with the other sarcoglycans. Disulfide bonds are present. In terms of tissue distribution, most strongly expressed in skeletal and heart muscle. Also detected in proliferating myoblasts.

The protein resides in the cell membrane. Its subcellular location is the sarcolemma. It localises to the cytoplasm. The protein localises to the cytoskeleton. Functionally, component of the sarcoglycan complex, a subcomplex of the dystrophin-glycoprotein complex which forms a link between the F-actin cytoskeleton and the extracellular matrix. The chain is Beta-sarcoglycan (Sgcb) from Mus musculus (Mouse).